The following is a 160-amino-acid chain: Ribosome maturation factor RimP (160 aa).

The protein belongs to the RimP family.

The protein resides in the cytoplasm. In terms of biological role, required for maturation of 30S ribosomal subunits. The sequence is that of Ribosome maturation factor RimP from Syntrophus aciditrophicus (strain SB).